Reading from the N-terminus, the 429-residue chain is MLIDKCTLFLRAGNGGNGVISWRKEAHYPEGGPWGGDGGKGGDVYIIGDHNLNSLIDLRYKKKIEAEDGENGKTKLATGKNGNDIYIKVPVGTTITNSITNEVIVDILVTGQKYLICKGGMGGKGNAYFKSSKNRIPNLCENGELGETIEAQFELKYIADVGLLGLPNAGKSTLVNSLSNTNLKTANYMFTTLSPSLGVVNFEDEHLVFADIPGIIEDASNGSGLGLDFLKHIERCHFLIHLISVANIDTENPFKDYLTIVEELKKYNKEILKRKIFIVLNKIDENDSKDNINLFLKEFKKISNKKVYQISGFFKENTNELLKDIFKDYKKHKEQWERELEEKINSYSLVKVEKEQEDIVTYEKDENRIWVVSSKRIAYWFNRIPFNTDENVTRFMQKIKMDEIEQTLKDKGAKIGDSFRIQDVMFEIN.

In terms of domain architecture, Obg spans 1-158 (MLIDKCTLFL…IEAQFELKYI (158 aa)). In terms of domain architecture, OBG-type G spans 159–330 (ADVGLLGLPN…LLKDIFKDYK (172 aa)). GTP contacts are provided by residues 165–172 (GLPNAGKS), 190–194 (FTTLS), 211–214 (DIPG), 281–284 (NKID), and 311–313 (SGF). Positions 172 and 192 each coordinate Mg(2+). Residues 351 to 429 (KVEKEQEDIV…RIQDVMFEIN (79 aa)) form the OCT domain.

This sequence belongs to the TRAFAC class OBG-HflX-like GTPase superfamily. OBG GTPase family. In terms of assembly, monomer. Mg(2+) serves as cofactor.

It localises to the cytoplasm. Functionally, an essential GTPase which binds GTP, GDP and possibly (p)ppGpp with moderate affinity, with high nucleotide exchange rates and a fairly low GTP hydrolysis rate. Plays a role in control of the cell cycle, stress response, ribosome biogenesis and in those bacteria that undergo differentiation, in morphogenesis control. The chain is GTPase Obg from Malacoplasma penetrans (strain HF-2) (Mycoplasma penetrans).